We begin with the raw amino-acid sequence, 187 residues long: MNLQHHFLIAMPALQDSVFKRSVVYICEHNEDGAMGLIINKPMDQFSVENVLKKLKIDPTPRDPAIRLDKPVFMGGPLADDRGFILHTPCPGFGSSISISEDTMITTSKDVLETLGTPSQPENTLVALGYSAWENGQLEEELLENAWLTTPADKDILFHTPIAERWRAAARKLGIDIHNISTEAGHA.

This sequence belongs to the UPF0301 (AlgH) family.

The polypeptide is UPF0301 protein PC1_3712 (Pectobacterium carotovorum subsp. carotovorum (strain PC1)).